A 144-amino-acid chain; its full sequence is Large ribosomal subunit protein uL15 (144 aa).

Residues 1 to 53 (MRLNTLSPAEGAKHSAKRLGRGIGSGLGKTGGRGHKGQKSRTGGGVRRGFEGG) are disordered. Gly residues predominate over residues 21–31 (RGIGSGLGKTG).

It belongs to the universal ribosomal protein uL15 family. Part of the 50S ribosomal subunit.

Functionally, binds to the 23S rRNA. In Pasteurella multocida (strain Pm70), this protein is Large ribosomal subunit protein uL15.